The chain runs to 109 residues: Large ribosomal subunit protein uL24 (109 aa).

This sequence belongs to the universal ribosomal protein uL24 family. In terms of assembly, part of the 50S ribosomal subunit.

In terms of biological role, one of two assembly initiator proteins, it binds directly to the 5'-end of the 23S rRNA, where it nucleates assembly of the 50S subunit. Functionally, one of the proteins that surrounds the polypeptide exit tunnel on the outside of the subunit. The protein is Large ribosomal subunit protein uL24 of Geotalea uraniireducens (strain Rf4) (Geobacter uraniireducens).